A 566-amino-acid polypeptide reads, in one-letter code: Erythroid membrane-associated protein (566 aa).

The first 29 residues, 1–29 (MERPSPCGSWLVGCLFTIAVFQPPVQVLG), serve as a signal peptide directing secretion. The 110-residue stretch at 30 to 139 (DAGKVYIAPL…SSREDNVTLQ (110 aa)) folds into the Ig-like V-type domain. The Extracellular segment spans residues 30–246 (DAGKVYIAPL…PERGSLSSPA (217 aa)). An intrachain disulfide couples Cys47 to Cys123. N-linked (GlcNAc...) asparagine glycosylation is found at Asn135 and Asn214. Residues 247-267 (VALSVVLPVLGLLILLGIWLI) traverse the membrane as a helical segment. Residues 268-566 (CKQKKSKEKL…ALKGLKVPSL (299 aa)) lie on the Cytoplasmic side of the membrane. Positions 311–509 (KLKRAAANAG…LIICTELQKS (199 aa)) constitute a B30.2/SPRY domain. Phosphoserine is present on Ser509.

It belongs to the immunoglobulin superfamily. BTN/MOG family. Glycosylated. Expressed in spleen and bone marrow.

Its subcellular location is the cell membrane. The protein localises to the cytoplasm. In terms of biological role, possible role as a cell-adhesion or receptor molecule of erythroid cells. The polypeptide is Erythroid membrane-associated protein (Ermap) (Mus musculus (Mouse)).